The primary structure comprises 301 residues: 4-diphosphocytidyl-2-C-methyl-D-erythritol kinase (301 aa).

The active site involves Lys-18. Residue 103 to 113 (PVAAGIGGGSA) coordinates ATP. Residue Asp-145 is part of the active site.

It belongs to the GHMP kinase family. IspE subfamily.

The enzyme catalyses 4-CDP-2-C-methyl-D-erythritol + ATP = 4-CDP-2-C-methyl-D-erythritol 2-phosphate + ADP + H(+). It functions in the pathway isoprenoid biosynthesis; isopentenyl diphosphate biosynthesis via DXP pathway; isopentenyl diphosphate from 1-deoxy-D-xylulose 5-phosphate: step 3/6. Functionally, catalyzes the phosphorylation of the position 2 hydroxy group of 4-diphosphocytidyl-2C-methyl-D-erythritol. The sequence is that of 4-diphosphocytidyl-2-C-methyl-D-erythritol kinase from Bradyrhizobium sp. (strain BTAi1 / ATCC BAA-1182).